Reading from the N-terminus, the 285-residue chain is Troponin T, cardiac muscle (285 aa).

Over residues M1–V58 the composition is skewed to acidic residues. 2 disordered regions span residues M1 to V83 and R111 to K206. S2 carries the N-acetylserine modification. S2 is modified (phosphoserine; by CK2). Pro residues predominate over residues R66–I77. Basic and acidic residues-rich tracts occupy residues R111 to R171 and Q190 to K206. The residue at position 191 (T191) is a Phosphothreonine; by PKC/PRKCA. S195 is modified (phosphoserine; by PKC/PRKCA). Position 200 is a phosphothreonine; by PKC/PRKCA and RAF1 (T200). At T281 the chain carries Phosphothreonine; by PKC/PRKCA.

This sequence belongs to the troponin T family. In terms of processing, the N-terminus is blocked. Post-translationally, phosphorylation at Thr-200 by PRKCA induces significant reduction in myofilament calcium sensitivity and actomyosin ATPase activity.

Troponin T is the tropomyosin-binding subunit of troponin, the thin filament regulatory complex which confers calcium-sensitivity to striated muscle actomyosin ATPase activity. This Bos taurus (Bovine) protein is Troponin T, cardiac muscle (TNNT2).